The sequence spans 242 residues: 1-(5-phosphoribosyl)-5-[(5-phosphoribosylamino)methylideneamino] imidazole-4-carboxamide isomerase (242 aa).

Catalysis depends on Asp-8, which acts as the Proton acceptor. The active-site Proton donor is Asp-129.

It belongs to the HisA/HisF family.

The protein localises to the cytoplasm. The catalysed reaction is 1-(5-phospho-beta-D-ribosyl)-5-[(5-phospho-beta-D-ribosylamino)methylideneamino]imidazole-4-carboxamide = 5-[(5-phospho-1-deoxy-D-ribulos-1-ylimino)methylamino]-1-(5-phospho-beta-D-ribosyl)imidazole-4-carboxamide. It functions in the pathway amino-acid biosynthesis; L-histidine biosynthesis; L-histidine from 5-phospho-alpha-D-ribose 1-diphosphate: step 4/9. The sequence is that of 1-(5-phosphoribosyl)-5-[(5-phosphoribosylamino)methylideneamino] imidazole-4-carboxamide isomerase from Clostridium botulinum (strain ATCC 19397 / Type A).